The following is a 430-amino-acid chain: GTPase Obg (430 aa).

An Obg domain is found at methionine 1 to leucine 158. A disordered region spans residues lysine 118–proline 145. The 171-residue stretch at alanine 159–glutamate 329 folds into the OBG-type G domain. GTP is bound by residues glycine 165–serine 172, phenylalanine 190–lysine 194, aspartate 212–glycine 215, asparagine 282–aspartate 285, and serine 310–isoleucine 312. Residues serine 172 and threonine 192 each coordinate Mg(2+). The OCT domain maps to lysine 352 to glutamate 430.

The protein belongs to the TRAFAC class OBG-HflX-like GTPase superfamily. OBG GTPase family. Monomer. It depends on Mg(2+) as a cofactor.

It is found in the cytoplasm. In terms of biological role, an essential GTPase which binds GTP, GDP and possibly (p)ppGpp with moderate affinity, with high nucleotide exchange rates and a fairly low GTP hydrolysis rate. Plays a role in control of the cell cycle, stress response, ribosome biogenesis and in those bacteria that undergo differentiation, in morphogenesis control. The polypeptide is GTPase Obg (Staphylococcus aureus (strain COL)).